The following is a 279-amino-acid chain: Oxygen-dependent coproporphyrinogen-III oxidase (279 aa).

S102 lines the substrate pocket. H106 and H116 together coordinate a divalent metal cation. The active-site Proton donor is the H116. 118-120 (NTR) is a substrate binding site. Positions 149 and 179 each coordinate a divalent metal cation. Residues 244–279 (YVEFNLLYDRGTKFGLMTDGNVEAILMSLPPEVKFN) are important for dimerization.

The protein belongs to the aerobic coproporphyrinogen-III oxidase family. In terms of assembly, homodimer. It depends on a divalent metal cation as a cofactor.

Its subcellular location is the cytoplasm. It carries out the reaction coproporphyrinogen III + O2 + 2 H(+) = protoporphyrinogen IX + 2 CO2 + 2 H2O. It participates in porphyrin-containing compound metabolism; protoporphyrin-IX biosynthesis; protoporphyrinogen-IX from coproporphyrinogen-III (O2 route): step 1/1. Its function is as follows. Involved in the heme biosynthesis. Catalyzes the aerobic oxidative decarboxylation of propionate groups of rings A and B of coproporphyrinogen-III to yield the vinyl groups in protoporphyrinogen-IX. The polypeptide is Oxygen-dependent coproporphyrinogen-III oxidase (Rickettsia peacockii (strain Rustic)).